Consider the following 68-residue polypeptide: Small ribosomal subunit protein bS21 (68 aa).

Belongs to the bacterial ribosomal protein bS21 family.

This is Small ribosomal subunit protein bS21 from Jannaschia sp. (strain CCS1).